Here is a 588-residue protein sequence, read N- to C-terminus: Aspartate--tRNA ligase (588 aa).

Glu172 contributes to the L-aspartate binding site. Residues 196–199 form an aspartate region; that stretch reads QLFK. Arg218 is a binding site for L-aspartate. ATP contacts are provided by residues 218–220 and Gln227; that span reads RDE. His449 contacts L-aspartate. Position 483 (Glu483) interacts with ATP. An L-aspartate-binding site is contributed by Arg490. An ATP-binding site is contributed by 535 to 538; that stretch reads GLDR.

This sequence belongs to the class-II aminoacyl-tRNA synthetase family. Type 1 subfamily. In terms of assembly, homodimer.

The protein resides in the cytoplasm. The enzyme catalyses tRNA(Asp) + L-aspartate + ATP = L-aspartyl-tRNA(Asp) + AMP + diphosphate. Functionally, catalyzes the attachment of L-aspartate to tRNA(Asp) in a two-step reaction: L-aspartate is first activated by ATP to form Asp-AMP and then transferred to the acceptor end of tRNA(Asp). The polypeptide is Aspartate--tRNA ligase (Haemophilus influenzae (strain ATCC 51907 / DSM 11121 / KW20 / Rd)).